Here is a 265-residue protein sequence, read N- to C-terminus: Small ribosomal subunit protein uS3 (265 aa).

The KH type-2 domain occupies 39-107; it reads VRDFLKKKLK…PVHVNIEEIR (69 aa). Residues 211 to 265 form a disordered region; it reads NDAPVVEEPQDDRRRRPGRPEGRRREGEGRPGGNRRGGAGAGRRAAPGADAKSGE. The segment covering 221–239 has biased composition (basic and acidic residues); that stretch reads DDRRRRPGRPEGRRREGEG. The segment covering 240–251 has biased composition (gly residues); the sequence is RPGGNRRGGAGA.

Belongs to the universal ribosomal protein uS3 family. Part of the 30S ribosomal subunit. Forms a tight complex with proteins S10 and S14.

Functionally, binds the lower part of the 30S subunit head. Binds mRNA in the 70S ribosome, positioning it for translation. This is Small ribosomal subunit protein uS3 from Cupriavidus necator (strain ATCC 17699 / DSM 428 / KCTC 22496 / NCIMB 10442 / H16 / Stanier 337) (Ralstonia eutropha).